Reading from the N-terminus, the 117-residue chain is Large ribosomal subunit protein bL17 (117 aa).

The protein belongs to the bacterial ribosomal protein bL17 family. In terms of assembly, part of the 50S ribosomal subunit. Contacts protein L32.

This Thermomicrobium roseum (strain ATCC 27502 / DSM 5159 / P-2) protein is Large ribosomal subunit protein bL17.